The sequence spans 137 residues: TSC22 domain family protein 3 (137 aa).

The tract at residues 1-60 (MNTEMYQTPMEVAVYQLHNFSISFFSSLLGGDVVSVKLDNSASGASVVALDNKIEQAMDL) is AP1-binding. Phosphoserine is present on residues Asn-40 and Val-73. The tract at residues 76-97 (LKEQIRELLEKNSQLERENTLL) is leucine-zipper. The disordered stretch occupies residues 101 to 137 (ASPEQLEKFQSRLSPEEPAPEAPETPETPEAPGGSAV). Ser-102 carries the phosphoserine modification. 2 positions are modified to phosphothreonine: Thr-125 and Thr-128. Residues 128–137 (TPEAPGGSAV) show a composition bias toward low complexity.

It belongs to the TSC-22/Dip/Bun family. Can form homodimers, however it is likely to function as a monomer. Interacts with NFKB1. Interacts (via N-terminus) with JUN and FOS; these interactions inhibit the binding of active AP1 to its target DNA. As to quaternary structure, interacts with MYOD1. Interacts with HDAC1; this interaction affects HDAC1 activity on MYOG promoter and thus inhibits MYOD1 transcriptional activity. In terms of assembly, interacts with MYOD1. As to expression, expressed in T-cells. Expression inversely correlates with T-cell activation, being higher in resting cells and lower in cells activated by TCR/CD3 triggering (at protein level). Constitutively expressed in lung, intestine, kidney and liver, most probably by resident cells from the macrophage lineage. Expressed in thymus, lymph nodes, bone marrow, spleen, lung and skeletal muscle. Expressed in spleen and skeletal muscle (at protein level). Expressed in the cortex, medulla and papilla of the kidney. In terms of tissue distribution, expressed in the cortex, medulla and papilla of the kidney. As to expression, expressed in spleen and skeletal muscle (at protein level).

The protein resides in the cytoplasm. The protein localises to the nucleus. Functionally, protects T-cells from IL2 deprivation-induced apoptosis through the inhibition of FOXO3A transcriptional activity that leads to the down-regulation of the pro-apoptotic factor BCL2L11. In macrophages, plays a role in the anti-inflammatory and immunosuppressive effects of glucocorticoids and IL10. In T-cells, inhibits anti-CD3-induced NFKB1 nuclear translocation and thereby NFKB1 DNA-binding activities. In vitro, suppresses AP-1 transcription factor complex DNA-binding activities. In terms of biological role, inhibits myogenic differentiation and mediates anti-myogenic effects of glucocorticoids by binding and regulating MYOD1 and HDAC1 transcriptional activity resulting in reduced expression of MYOG. The sequence is that of TSC22 domain family protein 3 from Mus musculus (Mouse).